We begin with the raw amino-acid sequence, 750 residues long: uncharacterized protein (750 aa).

5 helical membrane-spanning segments follow: residues 2 to 22, 33 to 53, 79 to 99, 116 to 136, and 143 to 163; these read FVLLMLALVMLFIVQSSTNVI, SLILIPLVTLLAGSITADIFI, LLVLLMYLSIVAVLSTAVVSL, LSIFVGTILNGIIFSAVTIML, and IQSLIILLLFVSLFSFSSPIA. 2 disordered regions span residues 385–461 and 571–651; these read DNKG…KKKE and NKEF…PLTA. Positions 398–411 are enriched in basic and acidic residues; it reads ENTKGDDNSSEKTD. The span at 412–424 shows a compositional bias: polar residues; sequence TVSVSTKLKTTAD. Low complexity predominate over residues 425 to 436; the sequence is QSESTQMSSEST. Over residues 437–451 the composition is skewed to polar residues; that stretch reads ATGISSDPQSQGKMN. Over residues 452–461 the composition is skewed to basic and acidic residues; that stretch reads NKSEEQKKKE. The span at 618–629 shows a compositional bias: polar residues; the sequence is DSKGNTATNSDT. Residues 724-744 traverse the membrane as a helical segment; it reads ATIVITLFLTVVLLAIAFFFF.

The protein to M.pneumoniae MPN_335.

The protein resides in the cell membrane. This is an uncharacterized protein from Mycoplasma pneumoniae (strain ATCC 29342 / M129 / Subtype 1) (Mycoplasmoides pneumoniae).